The following is a 29-amino-acid chain: Protein 1.5 (29 aa).

The protein is Protein 1.5 of Escherichia phage T7 (Bacteriophage T7).